Reading from the N-terminus, the 503-residue chain is 2-isopropylmalate synthase (503 aa).

The Pyruvate carboxyltransferase domain maps to 4–264 (LYIFDTTLRD…EVSIKTEEIY (261 aa)). Residues aspartate 13, histidine 201, histidine 203, and asparagine 237 each coordinate Mn(2+). Residues 388–503 (KLRHLQVVSG…NQLVMLKGKD (116 aa)) form a regulatory domain region.

This sequence belongs to the alpha-IPM synthase/homocitrate synthase family. LeuA type 1 subfamily. Homodimer. Mn(2+) is required as a cofactor.

Its subcellular location is the cytoplasm. The catalysed reaction is 3-methyl-2-oxobutanoate + acetyl-CoA + H2O = (2S)-2-isopropylmalate + CoA + H(+). It participates in amino-acid biosynthesis; L-leucine biosynthesis; L-leucine from 3-methyl-2-oxobutanoate: step 1/4. Its function is as follows. Catalyzes the condensation of the acetyl group of acetyl-CoA with 3-methyl-2-oxobutanoate (2-ketoisovalerate) to form 3-carboxy-3-hydroxy-4-methylpentanoate (2-isopropylmalate). This Dictyoglomus turgidum (strain DSM 6724 / Z-1310) protein is 2-isopropylmalate synthase.